The primary structure comprises 124 residues: MTKHYKIIGLRILSWVITITGLIIFIGNVHEYGLHFTYNQVLAIIIVILLLVTTMYFSVTPKLLKWNEKYELVWWLCYLCAPIYLFLTNLYNSTDLGYTIKFWLFFGGGAALIIISKYILKNKK.

This is an uncharacterized protein from Lactobacillus acidophilus.